Here is a 426-residue protein sequence, read N- to C-terminus: Histone deacetylase 9 (426 aa).

A histone deacetylase region spans residues 6-318 (KISYFYDGDV…WTVETGILLD (313 aa)). His-137 serves as the catalytic Proton donor/acceptor. Positions 172, 174, and 261 each coordinate Zn(2+). The interval 383-426 (PDFYIPDFDEDEQNPDVRADQRSRDKQIQRDDEYFDGDNDNDAS) is disordered. The segment covering 397–414 (PDVRADQRSRDKQIQRDD) has biased composition (basic and acidic residues). Over residues 415–426 (EYFDGDNDNDAS) the composition is skewed to acidic residues.

Belongs to the histone deacetylase family. HD type 1 subfamily. As to quaternary structure, interacts with AHL22. Binds to farnesylated ASG2 in the cytosol. It depends on Zn(2+) as a cofactor.

Its subcellular location is the nucleus. It is found in the cytoplasm. It localises to the cytosol. It carries out the reaction N(6)-acetyl-L-lysyl-[histone] + H2O = L-lysyl-[histone] + acetate. Responsible for the deacetylation of lysine residues on the N-terminal part of the core histones (H2A, H2B, H3 and H4). Histone deacetylation gives a tag for epigenetic repression and plays an important role in transcriptional regulation, cell cycle progression and developmental events. Histone deacetylases act via the formation of large multiprotein complexes. This Arabidopsis thaliana (Mouse-ear cress) protein is Histone deacetylase 9 (HDA9).